A 153-amino-acid polypeptide reads, in one-letter code: UPF0260 protein YcgN (153 aa).

The protein belongs to the UPF0260 family.

This is UPF0260 protein YcgN from Shigella boydii serotype 18 (strain CDC 3083-94 / BS512).